A 343-amino-acid polypeptide reads, in one-letter code: S-adenosylmethionine:tRNA ribosyltransferase-isomerase (343 aa).

The protein belongs to the QueA family. Monomer.

The protein resides in the cytoplasm. The catalysed reaction is 7-aminomethyl-7-carbaguanosine(34) in tRNA + S-adenosyl-L-methionine = epoxyqueuosine(34) in tRNA + adenine + L-methionine + 2 H(+). Its pathway is tRNA modification; tRNA-queuosine biosynthesis. Its function is as follows. Transfers and isomerizes the ribose moiety from AdoMet to the 7-aminomethyl group of 7-deazaguanine (preQ1-tRNA) to give epoxyqueuosine (oQ-tRNA). The chain is S-adenosylmethionine:tRNA ribosyltransferase-isomerase from Latilactobacillus sakei subsp. sakei (strain 23K) (Lactobacillus sakei subsp. sakei).